A 416-amino-acid chain; its full sequence is CinA-like protein (416 aa).

The protein belongs to the CinA family.

This chain is CinA-like protein, found in Syntrophomonas wolfei subsp. wolfei (strain DSM 2245B / Goettingen).